Reading from the N-terminus, the 470-residue chain is MSLLGRDYNSELNSLDNGPQSPSESSSSITSENVHPAGEAGLSMMQTLIHLLKCNIGTGLLGLPLAIKNAGLLVGPVSLLAIGVLTVHCMVILLNCAQHLSQRLQKTFVNYGEATMYGLETCPNTWLRAHAVWGRYTVSFLLVITQLGFCSVYFMFMADNLQQMVEKAHVTSNICQPREILTLTPILDIRFYMLIILPFLILLVFIQNLKVLSVFSTLANITTLGSMALIFEYIMEGIPYPSNLPLMANWKTFLLFFGTAIFTFEGVGMVLPLKNQMKHPQQFSFVLYLGMSIVIILYILLGTLGYMKFGSDTQASITLNLPNCWLYQSVKLMYSIGIFFTYALQFHVPAEIIIPFAISQVSESWALFVDLSVRSALVCLTCVSAILIPRLDLVISLVGSVSSSALALIIPALLEIVIFYSEDMSCVTIAKDIMISIVGLLGCIFGTYQALYELPQPISHSMANSTGVHA.

Topologically, residues 1–46 are cytoplasmic; sequence MSLLGRDYNSELNSLDNGPQSPSESSSSITSENVHPAGEAGLSMMQ. Residues 10–20 show a composition bias toward polar residues; sequence SELNSLDNGPQ. The tract at residues 10–33 is disordered; sequence SELNSLDNGPQSPSESSSSITSEN. The span at 21-31 shows a compositional bias: low complexity; sequence SPSESSSSITS. The helical transmembrane segment at 47–67 threads the bilayer; sequence TLIHLLKCNIGTGLLGLPLAI. Residues 68–71 are Extracellular-facing; sequence KNAG. A helical membrane pass occupies residues 72–92; that stretch reads LLVGPVSLLAIGVLTVHCMVI. Residues 93-137 are Cytoplasmic-facing; that stretch reads LLNCAQHLSQRLQKTFVNYGEATMYGLETCPNTWLRAHAVWGRYT. The helical transmembrane segment at 138 to 158 threads the bilayer; the sequence is VSFLLVITQLGFCSVYFMFMA. Residues 159–185 are Extracellular-facing; sequence DNLQQMVEKAHVTSNICQPREILTLTP. The chain crosses the membrane as a helical span at residues 186–206; the sequence is ILDIRFYMLIILPFLILLVFI. Topologically, residues 207–210 are cytoplasmic; it reads QNLK. Residues 211-231 traverse the membrane as a helical segment; it reads VLSVFSTLANITTLGSMALIF. Residues 232–252 are Extracellular-facing; it reads EYIMEGIPYPSNLPLMANWKT. The chain crosses the membrane as a helical span at residues 253–273; sequence FLLFFGTAIFTFEGVGMVLPL. The Cytoplasmic portion of the chain corresponds to 274–284; that stretch reads KNQMKHPQQFS. The chain crosses the membrane as a helical span at residues 285-305; that stretch reads FVLYLGMSIVIILYILLGTLG. Over 306-337 the chain is Extracellular; sequence YMKFGSDTQASITLNLPNCWLYQSVKLMYSIG. The chain crosses the membrane as a helical span at residues 338 to 358; that stretch reads IFFTYALQFHVPAEIIIPFAI. Topologically, residues 359 to 367 are cytoplasmic; the sequence is SQVSESWAL. The helical transmembrane segment at 368-388 threads the bilayer; it reads FVDLSVRSALVCLTCVSAILI. At 389 to 392 the chain is on the extracellular side; that stretch reads PRLD. The helical transmembrane segment at 393–413 threads the bilayer; it reads LVISLVGSVSSSALALIIPAL. The Cytoplasmic segment spans residues 414–425; it reads LEIVIFYSEDMS. Residues 426-446 form a helical membrane-spanning segment; sequence CVTIAKDIMISIVGLLGCIFG. Topologically, residues 447-470 are extracellular; that stretch reads TYQALYELPQPISHSMANSTGVHA.

The protein belongs to the amino acid/polyamine transporter 2 family. Specifically expressed in testis.

The protein localises to the membrane. The protein is Proton-coupled amino acid transporter 3 (SLC36A3) of Homo sapiens (Human).